Reading from the N-terminus, the 256-residue chain is Geranylgeranylglyceryl phosphate synthase (256 aa).

2 residues coordinate Mg(2+): aspartate 28 and serine 53. Residues 172-178 (YLEAGSG), 203-204 (GG), and 225-226 (GT) each bind sn-glycerol 1-phosphate.

The protein belongs to the GGGP/HepGP synthase family. Group II subfamily. It depends on Mg(2+) as a cofactor.

It is found in the cytoplasm. It catalyses the reaction sn-glycerol 1-phosphate + (2E,6E,10E)-geranylgeranyl diphosphate = sn-3-O-(geranylgeranyl)glycerol 1-phosphate + diphosphate. It participates in membrane lipid metabolism; glycerophospholipid metabolism. In terms of biological role, prenyltransferase that catalyzes the transfer of the geranylgeranyl moiety of geranylgeranyl diphosphate (GGPP) to the C3 hydroxyl of sn-glycerol-1-phosphate (G1P). This reaction is the first ether-bond-formation step in the biosynthesis of archaeal membrane lipids. This is Geranylgeranylglyceryl phosphate synthase from Methanococcus maripaludis (strain C7 / ATCC BAA-1331).